Reading from the N-terminus, the 81-residue chain is Large ribosomal subunit protein bL31 (81 aa).

This sequence belongs to the bacterial ribosomal protein bL31 family. Type A subfamily. As to quaternary structure, part of the 50S ribosomal subunit.

Binds the 23S rRNA. This Synechocystis sp. (strain ATCC 27184 / PCC 6803 / Kazusa) protein is Large ribosomal subunit protein bL31.